Consider the following 334-residue polypeptide: Malate dehydrogenase, mitochondrial (334 aa).

The transit peptide at 1 to 17 directs the protein to the mitochondrion; it reads MLSRVAKRAFSSTVANP. NAD(+) contacts are provided by residues 24 to 30 and aspartate 50; that span reads GAGGGIG. Substrate contacts are provided by arginine 99 and arginine 105. NAD(+)-binding positions include asparagine 112 and 135 to 137; that span reads ISN. The substrate site is built by asparagine 137 and arginine 171. A Phosphoserine modification is found at serine 177. Histidine 195 (proton acceptor) is an active-site residue. Position 199 is a phosphothreonine (threonine 199). Methionine 245 contacts NAD(+).

The protein belongs to the LDH/MDH superfamily. MDH type 1 family. Homodimer.

It localises to the mitochondrion matrix. The catalysed reaction is (S)-malate + NAD(+) = oxaloacetate + NADH + H(+). The sequence is that of Malate dehydrogenase, mitochondrial (MDH1) from Saccharomyces cerevisiae (strain ATCC 204508 / S288c) (Baker's yeast).